We begin with the raw amino-acid sequence, 183 residues long: Capsid protein (183 aa).

Residues 136-183 (NAPILSTLPETTVVRRRGRSPRRRTPSPRRRRSQSPRRRRTQSRESQC) form a disordered region. The segment covering 149-176 (VRRRGRSPRRRTPSPRRRRSQSPRRRRT) has biased composition (basic residues). Phosphoserine; by host occurs at positions 155, 162, and 170. The stretch at 155–161 (SPRRRTP) is one 1; half-length repeat. The 3 X 8 AA repeats of S-P-R-R-R-[PR]-[ST]-Q stretch occupies residues 155–177 (SPRRRTPSPRRRRSQSPRRRRTQ). The Bipartite nuclear localization signal signature appears at 158–175 (RRTPSPRRRRSQSPRRRR). A run of 2 repeats spans residues 162–169 (SPRRRRSQ) and 170–177 (SPRRRRTQ). The interval 177–183 (QSRESQC) is RNA binding.

The protein belongs to the orthohepadnavirus core antigen family. In terms of assembly, homodimerizes, then multimerizes. Interacts with cytosol exposed regions of viral L glycoprotein present in the reticulum-to-Golgi compartment. Interacts with human FLNB. Phosphorylated form interacts with host importin alpha; this interaction depends on the exposure of the NLS, which itself depends upon genome maturation and/or phosphorylation of the capsid protein. Interacts with host NUP153. In terms of processing, phosphorylated by host SRPK1, SRPK2, and maybe protein kinase C or GAPDH. Phosphorylation is critical for pregenomic RNA packaging. Protein kinase C phosphorylation is stimulated by HBx protein and may play a role in transport of the viral genome to the nucleus at the late step during the viral replication cycle.

It is found in the virion. The protein localises to the host cytoplasm. In terms of biological role, self assembles to form an icosahedral capsid. Most capsids appear to be large particles with an icosahedral symmetry of T=4 and consist of 240 copies of capsid protein, though a fraction forms smaller T=3 particles consisting of 180 capsid proteins. Entering capsids are transported along microtubules to the nucleus. Phosphorylation of the capsid is thought to induce exposure of nuclear localization signal in the C-terminal portion of the capsid protein that allows binding to the nuclear pore complex via the importin (karyopherin-) alpha and beta. Capsids are imported in intact form through the nuclear pore into the nuclear basket, where it probably binds NUP153. Only capsids that contain the mature viral genome can release the viral DNA and capsid protein into the nucleoplasm. Immature capsids get stuck in the basket. Capsids encapsulate the pre-genomic RNA and the P protein. Pre-genomic RNA is reverse-transcribed into DNA while the capsid is still in the cytoplasm. The capsid can then either be directed to the nucleus, providing more genomes for transcription, or bud through the endoplasmic reticulum to provide new virions. The chain is Capsid protein from Hepatitis B virus genotype D (isolate France/alpha1/1989) (HBV-D).